The chain runs to 292 residues: tRNA pseudouridine synthase B (292 aa).

Aspartate 38 acts as the Nucleophile in catalysis.

This sequence belongs to the pseudouridine synthase TruB family. Type 1 subfamily.

It catalyses the reaction uridine(55) in tRNA = pseudouridine(55) in tRNA. Functionally, responsible for synthesis of pseudouridine from uracil-55 in the psi GC loop of transfer RNAs. This chain is tRNA pseudouridine synthase B, found in Streptococcus sanguinis (strain SK36).